A 417-amino-acid polypeptide reads, in one-letter code: uncharacterized protein (417 aa).

The next 9 membrane-spanning stretches (helical) occupy residues 1-21 (MSVLSSILGMVVLIAIAVLLS), 32-52 (VVGALAIQVGFAALILYVPAG), 96-116 (VLPIIVFFSGLISVLYYLGIM), 168-188 (LFAIMVGGTASIAGSVMAGYA), 192-212 (VPLTYLIAASFMAAPAGLLFA), 261-281 (IAFVGLIALINGILSGVGGWF), 286-306 (LTLQSIFGLIFKPLAYLIGVT), 351-371 (AIITFALCGFANFSSIAILIG), and 392-412 (VIAGTLANLMSATIAGLFIGL).

It belongs to the concentrative nucleoside transporter (CNT) (TC 2.A.41) family.

Its subcellular location is the cell inner membrane. This is an uncharacterized protein from Haemophilus influenzae (strain ATCC 51907 / DSM 11121 / KW20 / Rd).